The following is a 146-amino-acid chain: Transcriptional repressor NrdR (146 aa).

A zinc finger lies at 3 to 34; the sequence is CPFCQNPDTKVIDTRISDDGHSIRRRRVCPKC. An ATP-cone domain is found at 46-136; sequence LLVTKRSGGV…VYQNFAGLED (91 aa).

It belongs to the NrdR family. Zn(2+) serves as cofactor.

Negatively regulates transcription of bacterial ribonucleotide reductase nrd genes and operons by binding to NrdR-boxes. The chain is Transcriptional repressor NrdR from Bifidobacterium longum (strain NCC 2705).